We begin with the raw amino-acid sequence, 224 residues long: UPF0758 protein Nmul_A2138 (224 aa).

Positions 102–224 constitute an MPN domain; the sequence is AMDSPGPVRA…TLSFAEQGLI (123 aa). Histidine 173, histidine 175, and aspartate 186 together coordinate Zn(2+). The short motif at 173-186 is the JAMM motif element; sequence HNHPSGAAEPSHAD.

The protein belongs to the UPF0758 family.

The polypeptide is UPF0758 protein Nmul_A2138 (Nitrosospira multiformis (strain ATCC 25196 / NCIMB 11849 / C 71)).